The sequence spans 545 residues: Chaperonin GroEL (545 aa).

ATP contacts are provided by residues 30 to 33 (TLGP), Lys51, 87 to 91 (DGTTT), Gly415, and Asp495.

The protein belongs to the chaperonin (HSP60) family. As to quaternary structure, forms a cylinder of 14 subunits composed of two heptameric rings stacked back-to-back. Interacts with the co-chaperonin GroES.

It localises to the cytoplasm. The enzyme catalyses ATP + H2O + a folded polypeptide = ADP + phosphate + an unfolded polypeptide.. Together with its co-chaperonin GroES, plays an essential role in assisting protein folding. The GroEL-GroES system forms a nano-cage that allows encapsulation of the non-native substrate proteins and provides a physical environment optimized to promote and accelerate protein folding. In Shewanella putrefaciens (strain CN-32 / ATCC BAA-453), this protein is Chaperonin GroEL.